Consider the following 599-residue polypeptide: Elongation factor 4 (599 aa).

In terms of domain architecture, tr-type G spans 4 to 186 (EHIRNFSIIA…EIVKKIPPPQ (183 aa)). GTP-binding positions include 16–21 (DHGKST) and 133–136 (NKID).

This sequence belongs to the TRAFAC class translation factor GTPase superfamily. Classic translation factor GTPase family. LepA subfamily.

It localises to the cell inner membrane. It catalyses the reaction GTP + H2O = GDP + phosphate + H(+). Functionally, required for accurate and efficient protein synthesis under certain stress conditions. May act as a fidelity factor of the translation reaction, by catalyzing a one-codon backward translocation of tRNAs on improperly translocated ribosomes. Back-translocation proceeds from a post-translocation (POST) complex to a pre-translocation (PRE) complex, thus giving elongation factor G a second chance to translocate the tRNAs correctly. Binds to ribosomes in a GTP-dependent manner. This Geobacter sp. (strain M21) protein is Elongation factor 4.